The sequence spans 564 residues: Type 2 DNA topoisomerase 6 subunit B (564 aa).

ATP-binding positions include Asn46, Asp78, 99-100, 109-116, and Lys471; these read TK and GQQGIGIS.

It belongs to the TOP6B family. As to quaternary structure, homodimer. Heterotetramer of two Top6A and two Top6B chains.

The enzyme catalyses ATP-dependent breakage, passage and rejoining of double-stranded DNA.. Functionally, relaxes both positive and negative superturns and exhibits a strong decatenase activity. This Pyrococcus abyssi (strain GE5 / Orsay) protein is Type 2 DNA topoisomerase 6 subunit B.